We begin with the raw amino-acid sequence, 122 residues long: Large ribosomal subunit protein eL22B (122 aa).

Belongs to the eukaryotic ribosomal protein eL22 family. In terms of assembly, component of the large ribosomal subunit (LSU). Mature yeast ribosomes consist of a small (40S) and a large (60S) subunit. The 40S small subunit contains 1 molecule of ribosomal RNA (18S rRNA) and 33 different proteins (encoded by 57 genes). The large 60S subunit contains 3 rRNA molecules (25S, 5.8S and 5S rRNA) and 46 different proteins (encoded by 81 genes).

The protein localises to the cytoplasm. Its function is as follows. Component of the ribosome, a large ribonucleoprotein complex responsible for the synthesis of proteins in the cell. The small ribosomal subunit (SSU) binds messenger RNAs (mRNAs) and translates the encoded message by selecting cognate aminoacyl-transfer RNA (tRNA) molecules. The large subunit (LSU) contains the ribosomal catalytic site termed the peptidyl transferase center (PTC), which catalyzes the formation of peptide bonds, thereby polymerizing the amino acids delivered by tRNAs into a polypeptide chain. The nascent polypeptides leave the ribosome through a tunnel in the LSU and interact with protein factors that function in enzymatic processing, targeting, and the membrane insertion of nascent chains at the exit of the ribosomal tunnel. This chain is Large ribosomal subunit protein eL22B, found in Saccharomyces cerevisiae (strain ATCC 204508 / S288c) (Baker's yeast).